We begin with the raw amino-acid sequence, 622 residues long: Mitochondrial distribution and morphology protein 34 (622 aa).

The SMP-LTD domain occupies 1–204; sequence MSFKVNWNSL…LPTLIHQLSL (204 aa). Disordered regions lie at residues 362–399 and 568–592; these read YSNK…PSEL and FDGG…TRNE. The span at 370–384 shows a compositional bias: basic residues; sequence KPKRRRIKVHKKNKS. Residues 390 to 399 show a composition bias toward polar residues; the sequence is TTTTSKPSEL. Residues 571–583 are compositionally biased toward low complexity; it reads GKNNNTNDNNSKN.

It belongs to the MDM34 family. In terms of assembly, component of the ER-mitochondria encounter structure (ERMES) or MDM complex, composed of MMM1, MDM10, MDM12 and MDM34.

The protein resides in the mitochondrion outer membrane. Its function is as follows. Component of the ERMES/MDM complex, which serves as a molecular tether to connect the endoplasmic reticulum (ER) and mitochondria. Components of this complex are involved in the control of mitochondrial shape and protein biogenesis, and function in nonvesicular lipid trafficking between the ER and mitochondria. MDM34 is required for the interaction of the ER-resident membrane protein MMM1 and the outer mitochondrial membrane-resident beta-barrel protein MDM10. The sequence is that of Mitochondrial distribution and morphology protein 34 from Candida dubliniensis (strain CD36 / ATCC MYA-646 / CBS 7987 / NCPF 3949 / NRRL Y-17841) (Yeast).